Consider the following 156-residue polypeptide: MALEKSLALLPLLVLVLLVLGWVQPSLGRESRAKKFQRQHMDSDGSPSSNPTYCNDMMRRRNMTQGRCKPVNTFVHEPLVDVQDVCFQEKVTCKNGQANCYKSSSSMHITDCRLTNGSRYPNCAYRTSQKERHIIVACEGNPYVPVHFDASVEDST.

A signal peptide spans 1–28 (MALEKSLALLPLLVLVLLVLGWVQPSLG). The segment covering 33–43 (AKKFQRQHMDS) has biased composition (basic and acidic residues). The disordered stretch occupies residues 33–52 (AKKFQRQHMDSDGSPSSNPT). Substrate-binding residues include Lys-35 and Arg-38. The active-site Proton acceptor is His-40. 4 disulfides stabilise this stretch: Cys-54–Cys-112, Cys-68–Cys-123, Cys-86–Cys-138, and Cys-93–Cys-100. A glycan (N-linked (GlcNAc...) asparagine) is linked at Asn-62. Substrate contacts are provided by residues 69–73 (KPVNT), Lys-94, and Arg-113. N-linked (GlcNAc...) asparagine glycosylation is present at Asn-116. Catalysis depends on His-147, which acts as the Proton donor.

This sequence belongs to the pancreatic ribonuclease family. As to quaternary structure, monomer. Interacts with and forms tight 1:1 complexes with RNH1. Dimerization of two such complexes may occur. Interaction with RNH1 inhibits this protein.

The protein localises to the secreted. It catalyses the reaction an [RNA] containing cytidine + H2O = an [RNA]-3'-cytidine-3'-phosphate + a 5'-hydroxy-ribonucleotide-3'-[RNA].. It carries out the reaction an [RNA] containing uridine + H2O = an [RNA]-3'-uridine-3'-phosphate + a 5'-hydroxy-ribonucleotide-3'-[RNA].. Functionally, endonuclease that catalyzes the cleavage of RNA on the 3' side of pyrimidine nucleotides. Acts on single-stranded and double-stranded RNA. The protein is Ribonuclease pancreatic (RNASE1) of Saimiri sciureus (Common squirrel monkey).